A 357-amino-acid chain; its full sequence is tRNA-specific 2-thiouridylase MnmA (357 aa).

ATP-binding positions include 3 to 10 and Leu29; that span reads AMSGGVDS. The Nucleophile role is filled by Cys98. A disulfide bridge connects residues Cys98 and Cys196. Gly122 contributes to the ATP binding site. Positions 146–148 are interaction with tRNA; it reads KDQ. The Cysteine persulfide intermediate role is filled by Cys196. Residues 302–303 form an interaction with tRNA region; sequence RY.

The protein belongs to the MnmA/TRMU family.

The protein localises to the cytoplasm. The enzyme catalyses S-sulfanyl-L-cysteinyl-[protein] + uridine(34) in tRNA + AH2 + ATP = 2-thiouridine(34) in tRNA + L-cysteinyl-[protein] + A + AMP + diphosphate + H(+). In terms of biological role, catalyzes the 2-thiolation of uridine at the wobble position (U34) of tRNA, leading to the formation of s(2)U34. The sequence is that of tRNA-specific 2-thiouridylase MnmA from Moorella thermoacetica (strain ATCC 39073 / JCM 9320).